The chain runs to 367 residues: Putative F-box protein At3g21130 (367 aa).

In terms of domain architecture, F-box spans 4-50 (KRNTVYLSEDLIVEILSRVSAVSLARLRTTSKRWNALVKDERLAKKH).

In Arabidopsis thaliana (Mouse-ear cress), this protein is Putative F-box protein At3g21130.